Consider the following 289-residue polypeptide: Glycine--tRNA ligase alpha subunit (289 aa).

This sequence belongs to the class-II aminoacyl-tRNA synthetase family. In terms of assembly, tetramer of two alpha and two beta subunits.

It localises to the cytoplasm. The catalysed reaction is tRNA(Gly) + glycine + ATP = glycyl-tRNA(Gly) + AMP + diphosphate. This chain is Glycine--tRNA ligase alpha subunit, found in Rickettsia typhi (strain ATCC VR-144 / Wilmington).